The sequence spans 319 residues: MSKKTKQELENNKLSKRLRHAVGDTINDFNMIEPGDKIMVCLSGGKDSYALLDILRRLQASAPIDFELVAVNLDQKQPGFPEEVLPTYLESIGVPYKIVEEDTYSTVKRVLDEGKTTCSLCSRLRRGILYRTAKELGCTKIALGHHRDDILATMFLNMFYGGKLKAMPPKLVSDNGEHIVIRPLAYVKEKDLIKYAELKQFPIIPCNLCGSQPNLQRQVIGDMLRDWDKRFPGRIESMFSALQNVVPSHLADTELFDFAGLERGQNLKHGGDLAFDSEKMPERFSDGSEEDESEIKIEPQKAERKVINILANKPKTCGP.

A PP-loop motif motif is present at residues 43 to 48 (SGGKDS). Residues Cys-118, Cys-121, and Cys-209 each coordinate [4Fe-4S] cluster. Residues 272–297 (DLAFDSEKMPERFSDGSEEDESEIKI) are disordered. Positions 276–286 (DSEKMPERFSD) are enriched in basic and acidic residues.

It belongs to the TtcA family. As to quaternary structure, homodimer. Requires Mg(2+) as cofactor. The cofactor is [4Fe-4S] cluster.

The protein resides in the cytoplasm. The enzyme catalyses cytidine(32) in tRNA + S-sulfanyl-L-cysteinyl-[cysteine desulfurase] + AH2 + ATP = 2-thiocytidine(32) in tRNA + L-cysteinyl-[cysteine desulfurase] + A + AMP + diphosphate + H(+). Its pathway is tRNA modification. Its function is as follows. Catalyzes the ATP-dependent 2-thiolation of cytidine in position 32 of tRNA, to form 2-thiocytidine (s(2)C32). The sulfur atoms are provided by the cysteine/cysteine desulfurase (IscS) system. The protein is tRNA-cytidine(32) 2-sulfurtransferase of Neisseria gonorrhoeae (strain ATCC 700825 / FA 1090).